The primary structure comprises 200 residues: CASP-like protein 1U2 (200 aa).

At 1–33 (MAEPVIVVPRKGVYSDDSYHHHHRHHSFHSCTN) the chain is on the cytoplasmic side. The chain crosses the membrane as a helical span at residues 34 to 54 (FLLRTLTAGATAAAVVVMLIS). At 55–77 (TQTSGTIYGYFRGRWRDYPAYKW) the chain is on the extracellular side. The helical transmembrane segment at 78–98 (LIIANAVVFVYSVMAAIVACF) threads the bilayer. At 99 to 120 (SVIARRGPLSYSPSAWLTLLVD) the chain is on the cytoplasmic side. Residues 121 to 141 (FLAASALISAASAALAVALLA) form a helical membrane-spanning segment. At 142-168 (RNGQDLQGTHYWPTVCNYVSKFCDYTQ) the chain is on the extracellular side. Residues 169-189 (GAIIASFVGFGLLFLSTLLAA) form a helical membrane-spanning segment. Over 190–200 (SALYHLSHRRH) the chain is Cytoplasmic.

This sequence belongs to the Casparian strip membrane proteins (CASP) family. Homodimer and heterodimers.

It is found in the cell membrane. This is CASP-like protein 1U2 from Physcomitrium patens (Spreading-leaved earth moss).